Reading from the N-terminus, the 332-residue chain is Biotin synthase (332 aa).

The 231-residue stretch at 53–283 folds into the Radical SAM core domain; the sequence is WGKGGVHACS…VHPRKTIKFA (231 aa). [4Fe-4S] cluster contacts are provided by cysteine 71, cysteine 75, and cysteine 78. Residues cysteine 150, cysteine 211, and lysine 281 each coordinate [2Fe-2S] cluster.

It belongs to the radical SAM superfamily. Biotin synthase family. As to quaternary structure, homodimer. [4Fe-4S] cluster serves as cofactor. It depends on [2Fe-2S] cluster as a cofactor.

The catalysed reaction is (4R,5S)-dethiobiotin + (sulfur carrier)-SH + 2 reduced [2Fe-2S]-[ferredoxin] + 2 S-adenosyl-L-methionine = (sulfur carrier)-H + biotin + 2 5'-deoxyadenosine + 2 L-methionine + 2 oxidized [2Fe-2S]-[ferredoxin]. It participates in cofactor biosynthesis; biotin biosynthesis; biotin from 7,8-diaminononanoate: step 2/2. Functionally, catalyzes the conversion of dethiobiotin (DTB) to biotin by the insertion of a sulfur atom into dethiobiotin via a radical-based mechanism. This chain is Biotin synthase, found in Chlorobium luteolum (strain DSM 273 / BCRC 81028 / 2530) (Pelodictyon luteolum).